Reading from the N-terminus, the 66-residue chain is Large ribosomal subunit protein bL33c (66 aa).

The protein belongs to the bacterial ribosomal protein bL33 family.

The protein localises to the plastid. It is found in the chloroplast. The chain is Large ribosomal subunit protein bL33c from Adiantum capillus-veneris (Maidenhair fern).